A 284-amino-acid chain; its full sequence is 2-dehydro-3-deoxyphosphooctonate aldolase (284 aa).

Belongs to the KdsA family.

Its subcellular location is the cytoplasm. The catalysed reaction is D-arabinose 5-phosphate + phosphoenolpyruvate + H2O = 3-deoxy-alpha-D-manno-2-octulosonate-8-phosphate + phosphate. The protein operates within carbohydrate biosynthesis; 3-deoxy-D-manno-octulosonate biosynthesis; 3-deoxy-D-manno-octulosonate from D-ribulose 5-phosphate: step 2/3. It participates in bacterial outer membrane biogenesis; lipopolysaccharide biosynthesis. This Glaesserella parasuis serovar 5 (strain SH0165) (Haemophilus parasuis) protein is 2-dehydro-3-deoxyphosphooctonate aldolase.